The chain runs to 458 residues: MAECRPWLVLWVGCCGCLCLALGELLNDGLLAVGMGTGDAARQEEAALPLGDTVSEHMLRLYDKYRSGGGRAKESLRYRQALPDGNTVRSFRAMNGDEHKKCHYMFNLTSLTSSENILSATLHYYLGDLLNSSHRCPHSLFCTQHGHAKPEFTLYLTLWSFNALQNPTHVISNFLINVSASQRDHPLWQWKDITQAVRKAKEYGEAVLGFNLTIEYPNHRSIDILGLKPYILVYANDSAISEPDSVVSSLHGPHTPLALKPNRKTEKAEQRKKRSTEILLPLQNNELPGAEYQYSVDEEGWEERKPYKNLQGRQNEKDKNKKKLRKGSRQKSQTLQFDEQTLKKARRKQWNEPRNCARRYLKVDFADIGWSEWIISPKSFDAYYCSGACQFPMPKSLKPSNHATIQSIVRAVGVVPGIPEPCCVPEKMSSLSILFLDENKNVVLKVYPNMTVESCACR.

Residues 1–23 form the signal peptide; that stretch reads MAECRPWLVLWVGCCGCLCLALG. The propeptide occupies 24-348; sequence ELLNDGLLAV…EQTLKKARRK (325 aa). A glycan (N-linked (GlcNAc...) asparagine) is linked at Asn-107. Disordered regions lie at residues 244 to 275 and 303 to 335; these read DSVV…KKRS and ERKP…SQTL. A compositionally biased stretch (basic residues) spans 320 to 329; sequence NKKKLRKGSR. 3 disulfide bridges follow: Cys-356/Cys-423, Cys-385/Cys-455, and Cys-389/Cys-457. The N-linked (GlcNAc...) asparagine glycan is linked to Asn-449.

This sequence belongs to the TGF-beta family. In terms of assembly, homodimer. Can form heterodimers with ADMP, BMP-2-I and/or BMP-2-II, and DERRIERE.

It is found in the secreted. Dorsalizing factor. Antagonizes mesoderm formation by ventralizing BMPs. The sequence is that of Bone morphogenetic protein 3 (bmp3) from Xenopus laevis (African clawed frog).